The following is a 242-amino-acid chain: Biosynthetic peptidoglycan transglycosylase (242 aa).

A helical transmembrane segment spans residues 15–35; sequence FLLLLMVVLAVFWGGGIALFS.

The protein belongs to the glycosyltransferase 51 family.

Its subcellular location is the cell inner membrane. It catalyses the reaction [GlcNAc-(1-&gt;4)-Mur2Ac(oyl-L-Ala-gamma-D-Glu-L-Lys-D-Ala-D-Ala)](n)-di-trans,octa-cis-undecaprenyl diphosphate + beta-D-GlcNAc-(1-&gt;4)-Mur2Ac(oyl-L-Ala-gamma-D-Glu-L-Lys-D-Ala-D-Ala)-di-trans,octa-cis-undecaprenyl diphosphate = [GlcNAc-(1-&gt;4)-Mur2Ac(oyl-L-Ala-gamma-D-Glu-L-Lys-D-Ala-D-Ala)](n+1)-di-trans,octa-cis-undecaprenyl diphosphate + di-trans,octa-cis-undecaprenyl diphosphate + H(+). The protein operates within cell wall biogenesis; peptidoglycan biosynthesis. Functionally, peptidoglycan polymerase that catalyzes glycan chain elongation from lipid-linked precursors. The sequence is that of Biosynthetic peptidoglycan transglycosylase from Shigella sonnei (strain Ss046).